Reading from the N-terminus, the 268-residue chain is Lipase (268 aa).

The first 34 residues, 1 to 34 (MRLSRRAATASALLLTPALALFGASAAVSAPRIQ), serve as a signal peptide directing secretion. The active-site Nucleophile is the Ser44. 3 disulfide bridges follow: Cys61–Cys86, Cys127–Cys135, and Cys185–Cys232. His250 is an active-site residue.

As to quaternary structure, monomer.

The protein localises to the secreted. It catalyses the reaction a triacylglycerol + H2O = a diacylglycerol + a fatty acid + H(+). The enzyme catalyses hexadecanoyl-CoA + H2O = hexadecanoate + CoA + H(+). Its activity is regulated as follows. Inhibited by 3,4-dichloroisocoumarin and tetrahydrolipstatin in the absence of substrate, but by phenylmethylsulfonyl fluoride (PMSF) only in the presence of substrate. Several water-miscible solvents enhance the lipase hydrolytic activity in vitro. Tetrahydrofuran and N,N-dimethylformamide (both 50%) inactivate the enzyme with t1/2 of 5 minutes and t1/2 of 2 hours, respectively. Its function is as follows. Catalyzes the hydrolysis of p-nitrophenyl esters, alpha- and beta-naphthyl esters, and triacylglycerols, with a preference for medium acyl chain length (C8-C12). Shows a much higher hydrolysis rate of glycerol esters of unsaturated C16 and C18 fatty acids than that of their saturated counterparts, and a preference for cis double bond. Is also able to hydrolyze several natural oils and Tween detergents. Also displays thioesterase and phospholipase activities, towards palmitoyl-coenzyme A and diheptanoyl glycerophosphocholine, respectively. Shows transesterification activity of racemic 1-phenyl ethanol with vinyl acetate in hexane, proceeding with partial (R)-enantioselectivity. The polypeptide is Lipase (Streptomyces rimosus).